The sequence spans 662 residues: MINRITDNKFKLVSKYQPSGDQPQAIEQLVDNIEGGEKAQILMGATGTGKTYTMSQVISKVNKPTLVIAHNKTLAGQLYGEFKEFFPENAVEYFVSYYDYYQPEAYVPSSDTYIEKDSSVNDEIDKLRHSATSALLERNDVIVVASVSCIYGLGSPKEYADSVVSLRPGLEISRDKLLNDLVDIQFERNDIDFQRGRFRVRGDVVEIFPASRDEHAFRVEFFGDEIDRIREVEALTGQVLGEVDHLAIFPATHFVTNDDHMEVAIAKIQAELEEQLAVFEKEGKLLEAQRLKQRTEYDIEMLREMGYTNGVENYSRHMDGRSEGEPPYTLLDFFPDDFLIMIDESHMTMGQIKGMYNGDRSRKEMLVNYGFRLPSALDNRPLRREEFESHVHQIVYVSATPGDYENEQTETVIEQIIRPTGLLDPEVEVRPTMGQIDDLLGEINARVEKNERTFITTLTKKMAEDLTDYFKEMGIKVKYMHSDIKTLERTEIIRDLRLGVFDVLVGINLLREGIDVPEVSLVAILDADKEGFLRNERGLIQTIGRAARNSEGHVIMYADTVTQSMQRAIDETARRRKIQMAYNEEHGIVPQTIKKEIRDLIAVTKAVSKEEDKEVDINSLNKQERKELVKKLEKQMQEAVEVLDFELAAQIRDMMLEVKALD.

The 158-residue stretch at 31 to 188 (DNIEGGEKAQ…NDLVDIQFER (158 aa)) folds into the Helicase ATP-binding domain. 44 to 51 (GATGTGKT) is an ATP binding site. Residues 97–120 (YYDYYQPEAYVPSSDTYIEKDSSV) carry the Beta-hairpin motif. One can recognise a Helicase C-terminal domain in the interval 435 to 601 (QIDDLLGEIN…TIKKEIRDLI (167 aa)). The region spanning 626 to 661 (KELVKKLEKQMQEAVEVLDFELAAQIRDMMLEVKAL) is the UVR domain.

The protein belongs to the UvrB family. In terms of assembly, forms a heterotetramer with UvrA during the search for lesions. Interacts with UvrC in an incision complex.

It localises to the cytoplasm. In terms of biological role, the UvrABC repair system catalyzes the recognition and processing of DNA lesions. A damage recognition complex composed of 2 UvrA and 2 UvrB subunits scans DNA for abnormalities. Upon binding of the UvrA(2)B(2) complex to a putative damaged site, the DNA wraps around one UvrB monomer. DNA wrap is dependent on ATP binding by UvrB and probably causes local melting of the DNA helix, facilitating insertion of UvrB beta-hairpin between the DNA strands. Then UvrB probes one DNA strand for the presence of a lesion. If a lesion is found the UvrA subunits dissociate and the UvrB-DNA preincision complex is formed. This complex is subsequently bound by UvrC and the second UvrB is released. If no lesion is found, the DNA wraps around the other UvrB subunit that will check the other stand for damage. In Streptococcus pneumoniae (strain Taiwan19F-14), this protein is UvrABC system protein B.